The following is a 227-amino-acid chain: UPF0173 metal-dependent hydrolase BCE33L4354 (227 aa).

It belongs to the UPF0173 family.

This Bacillus cereus (strain ZK / E33L) protein is UPF0173 metal-dependent hydrolase BCE33L4354.